A 570-amino-acid chain; its full sequence is Probable glucomannan 4-beta-mannosyltransferase 11 (570 aa).

The chain crosses the membrane as a helical span at residues 57-77; it reads LAMTVMILAEKLFVAAVCLAV. D157 is a catalytic residue. Substrate contacts are provided by D216 and D218. The active site involves D310. Transmembrane regions (helical) follow at residues 389-409, 412-432, 522-542, and 548-568; these read IAAH…SVWL, IEIP…CKAV, YSEI…VLYA, and IFLF…IGVC.

The protein belongs to the glycosyltransferase 2 family. Plant cellulose synthase-like A subfamily.

The protein resides in the golgi apparatus membrane. It catalyses the reaction GDP-mannose + (glucomannan)n = GDP + (glucomannan)n+1.. Its function is as follows. Probable mannan synthase which consists of a 4-beta-mannosyltransferase activity on mannan using GDP-mannose. The beta-1,4-mannan product is the backbone for galactomannan synthesis by galactomannan galactosyltransferase. Galactomannan is a noncellulosic polysaccharides of plant cell wall. This chain is Probable glucomannan 4-beta-mannosyltransferase 11, found in Oryza sativa subsp. japonica (Rice).